The primary structure comprises 132 residues: MLFGTYEHCMDAKQRLTLPAKLRNKLSNPIYLTKGFEADLEIWSKDDFLLQIKEHLNKISDQKDIRDLERIIWSNTVEIGIDNLGRIKIPYNLIQSLNIEKDVFILGLGNRLEIWSKNKYNQHKKELLKENS.

SpoVT-AbrB domains follow at residues 5 to 47 (TYEH…SKDD) and 76 to 119 (TVEI…SKNK).

It belongs to the MraZ family. As to quaternary structure, forms oligomers.

The protein resides in the cytoplasm. It is found in the nucleoid. The polypeptide is Transcriptional regulator MraZ (Mycoplasma capricolum subsp. capricolum (strain California kid / ATCC 27343 / NCTC 10154)).